The primary structure comprises 305 residues: Coiled-coil domain-containing protein 83 (305 aa).

Positions 1–25 (MDSSAKGSKKDAPDGPPKDSKLPVS) are disordered. The span at 8–21 (SKKDAPDGPPKDSK) shows a compositional bias: basic and acidic residues. Positions 37-186 (ENAVERFMFH…LEDEKKRISR (150 aa)) form a coiled coil.

The protein is Coiled-coil domain-containing protein 83 (Ccdc83) of Mus musculus (Mouse).